A 198-amino-acid polypeptide reads, in one-letter code: MKQPSALSALVEALRALPGVGPKSAQRMAYHLMQHDRDGAEKLGRSLLFATEHLQHCEKCNTFTEAQICEVCLDEERDPTLLCVVETPADQIMLEQTMTYRGLYFVLMGRLSPLDGIGPKEIHFDRLVRRASDGVIKEVVLATNFTNEGEATAHYLGQTLKARGLAVTRLARGVPVGGELEYVDAGTIARAMLDRRSM.

The C4-type zinc-finger motif lies at 57 to 72 (CEKCNTFTEAQICEVC). Residues 80-175 (TLLCVVETPA…AVTRLARGVP (96 aa)) form the Toprim domain.

The protein belongs to the RecR family.

In terms of biological role, may play a role in DNA repair. It seems to be involved in an RecBC-independent recombinational process of DNA repair. It may act with RecF and RecO. The polypeptide is Recombination protein RecR (Paraburkholderia phytofirmans (strain DSM 17436 / LMG 22146 / PsJN) (Burkholderia phytofirmans)).